The following is a 375-amino-acid chain: MKFWLLLGLLLLHEALEDVAGQHSPKNKRPKEQGENRIKPTNKKAKPKIPKVKDRDSTDSTAKSQSIMMQAMGNGRFQRPAATVSLLAGQTLELRCKGSKVEWSYPAYLDTFKDSRLTVKQSERYGQLTLVNSTAADTGEFSCWEQLCNGYICRRDEAKTGSTYIFFTEKGELFVPSPSYFDVVYLNPDRQAVVPCRVTAPSAKVTLHREFPAKEIPANGTDIVYDMKRGFVYLQPHSDHQGVVYCKAEAGGKSQISVKYQLLYVEVPSGPPSTTILASSNKVRGGDDISVLCTVLGEPDVEVEFRWLFPGQKDERPVTIQDTWRLIHRGLGHTTRISQSVIIVEDFETIDAGYYICTAQNLRGQTTVATTVEFS.

The first 21 residues, 1–21 (MKFWLLLGLLLLHEALEDVAG), serve as a signal peptide directing secretion. The interval 20 to 63 (AGQHSPKNKRPKEQGENRIKPTNKKAKPKIPKVKDRDSTDSTAK) is disordered. Positions 40 to 50 (PTNKKAKPKIP) are enriched in basic residues. The 113-residue stretch at 47 to 159 (PKIPKVKDRD…GYICRRDEAK (113 aa)) folds into the Ig-like C2-type 1 domain. An intrachain disulfide couples Cys-96 to Cys-143. An N-linked (GlcNAc...) asparagine glycan is attached at Asn-219. In terms of domain architecture, Ig-like C2-type 2 spans 272–375 (PSTTILASSN…TTVATTVEFS (104 aa)). An intrachain disulfide couples Cys-293 to Cys-357.

In terms of assembly, forms a complex composed of PDGFRL, TNK2 and GRB2.

The protein resides in the secreted. This Mus musculus (Mouse) protein is Platelet-derived growth factor receptor-like protein (Pdgfrl).